The sequence spans 150 residues: Putative HTH-type transcriptional regulator HI_0379 (150 aa).

The HTH rrf2-type domain maps to 2–131 (KLTSKGRYAV…NEITLAELVN (130 aa)).

The sequence is that of Putative HTH-type transcriptional regulator HI_0379 from Haemophilus influenzae (strain ATCC 51907 / DSM 11121 / KW20 / Rd).